Here is a 332-residue protein sequence, read N- to C-terminus: 30 kDa heat shock protein (332 aa).

Over 1 to 34 the chain is Extracellular; that stretch reads MNDTLSSFLNRNEALGLNPPHGLDMHITKRGSDW. A helical transmembrane segment spans residues 35–55; that stretch reads LWAVFAVFGFILLCYVVMFFI. Over 56–65 the chain is Cytoplasmic; it reads AENKGSRLTR. A helical transmembrane segment spans residues 66-86; the sequence is YALAPAFLITFFEFFAFFTYA. Residues 87–121 lie on the Extracellular side of the membrane; that stretch reads SDLGWTGVQAEFNHVKVSKSITGEVPGIRQIFYSK. The chain crosses the membrane as a helical span at residues 122-142; that stretch reads YIAWFLSWPCLLFLIELAAST. The Cytoplasmic portion of the chain corresponds to 143-157; that stretch reads TGENDDISALDMVHS. Residues 158-178 traverse the membrane as a helical segment; it reads LLIQIVGTLFWVVSLLVGSLI. Residues 179–181 lie on the Extracellular side of the membrane; the sequence is KST. Residues 182-202 form a helical membrane-spanning segment; it reads YKWGYYTIGAVAMLVTQGVIC. The Cytoplasmic segment spans residues 203-215; the sequence is QRQFFNLKTRGFN. A helical membrane pass occupies residues 216 to 236; the sequence is ALMLCTCMVIVWLYFICWGLS. Residues 237 to 248 lie on the Extracellular side of the membrane; sequence DGGNRIQPDGEA. The helical transmembrane segment at 249 to 269 threads the bilayer; it reads IFYGVLDLCVFAIYPCYLLIA. Residues 270-332 lie on the Cytoplasmic side of the membrane; the sequence is VSRDGKLPRL…EAEQAVEDTA (63 aa). A disordered region spans residues 290–332; the sequence is ATDDVEDAAPETKEAVPESPRASGETAIHEPEPEAEQAVEDTA. A Phosphoserine modification is found at Ser-308. The segment covering 322-332 has biased composition (acidic residues); it reads PEAEQAVEDTA. Residue Thr-331 is modified to Phosphothreonine.

Belongs to the archaeal/bacterial/fungal opsin family.

Its subcellular location is the membrane. Its function is as follows. Probably cooperates with other heat shock proteins in the translocation of polypeptides through membranes. It may counteract the altering effect of heat shock on the plasma membrane. This Saccharomyces cerevisiae (strain ATCC 204508 / S288c) (Baker's yeast) protein is 30 kDa heat shock protein (HSP30).